Consider the following 357-residue polypeptide: Decorin (357 aa).

The signal sequence occupies residues 1 to 16; it reads MRLVLLFVLLLPVCLA. Residues 17–30 constitute a propeptide that is removed on maturation; that stretch reads TRFHQKGLFDFMIE. Serine 46 carries O-linked (Xyl...) (glycosaminoglycan) serine glycosylation. Cystine bridges form between cysteine 52–cysteine 58 and cysteine 56–cysteine 65. LRR repeat units follow at residues 71 to 91, 92 to 115, 116 to 139, 140 to 160, 161 to 184, 185 to 210, 211 to 231, 232 to 255, 256 to 279, 280 to 302, 303 to 332, and 333 to 357; these read ERVP…NNKI, TEIK…NNKI, SKIS…KNNL, KELP…ENEI, SKLR…TNPL, KSSG…DTNI, TSIP…GNKI, SKID…FNSI, SSVE…NNEL, VRVP…NNKI, ASIG…SNPV, and QYWE…GNYK. N-linked (GlcNAc...) asparagine glycosylation occurs at asparagine 209. An N-linked (GlcNAc...) asparagine glycan is attached at asparagine 260. Residues cysteine 311 and cysteine 344 are joined by a disulfide bond.

The protein belongs to the small leucine-rich proteoglycan (SLRP) family. SLRP class I subfamily. As to quaternary structure, binds to type I and type II collagen, to fibronectin and TGF-beta. Forms a ternary complex with MFAP2 and ELN. The attached glycosaminoglycan chain can be either chondroitin sulfate or dermatan sulfate depending upon the tissue of origin.

The protein resides in the secreted. It is found in the extracellular space. The protein localises to the extracellular matrix. Its function is as follows. May affect the rate of fibrils formation. This chain is Decorin (DCN), found in Gallus gallus (Chicken).